The chain runs to 187 residues: UPF0301 protein PC1_3712 (187 aa).

This sequence belongs to the UPF0301 (AlgH) family.

The polypeptide is UPF0301 protein PC1_3712 (Pectobacterium carotovorum subsp. carotovorum (strain PC1)).